Consider the following 564-residue polypeptide: Urocanate hydratase (564 aa).

Residues 58 to 59, Q136, 182 to 184, E202, R207, 245 to 246, 266 to 270, 276 to 277, and Y325 contribute to the NAD(+) site; these read GG, GMG, NA, QTSAH, and YL. The active site involves C413. G495 contributes to the NAD(+) binding site.

This sequence belongs to the urocanase family. It depends on NAD(+) as a cofactor.

It localises to the cytoplasm. The catalysed reaction is 4-imidazolone-5-propanoate = trans-urocanate + H2O. The protein operates within amino-acid degradation; L-histidine degradation into L-glutamate; N-formimidoyl-L-glutamate from L-histidine: step 2/3. Catalyzes the conversion of urocanate to 4-imidazolone-5-propionate. The chain is Urocanate hydratase from Vibrio atlanticus (strain LGP32) (Vibrio splendidus (strain Mel32)).